The sequence spans 104 residues: Flagellar hook-basal body complex protein FliE (104 aa).

The protein belongs to the FliE family.

It localises to the bacterial flagellum basal body. This Salmonella heidelberg (strain SL476) protein is Flagellar hook-basal body complex protein FliE.